The following is a 951-amino-acid chain: WD repeat-containing and planar cell polarity effector protein fritz (951 aa).

2 WD repeats span residues 304 to 343 (PMGAQICSFAFSPDQEKLFLGSVDRNICLHDLVQQSTKYA) and 345 to 384 (QIEIVPNQCAWHCDSAMLCVANERSVLQCFDLALATIGHQ). Composition is skewed to polar residues over residues 709 to 720 (TLKSNSSLQQAP), 757 to 771 (IPDQSAQLGQFSTMP), and 818 to 828 (SILSNPANPAP). 3 disordered regions span residues 709 to 776 (TLKS…SPPP), 816 to 883 (TASI…AARH), and 903 to 951 (EYLK…FGVV). Residues 930-942 (SSKGGNSSSSSSS) show a composition bias toward low complexity.

The protein belongs to the WD repeat fritz family.

The protein resides in the cell membrane. The protein localises to the cytoplasm. It is found in the cytoskeleton. It localises to the cilium axoneme. In terms of biological role, probable effector of the planar cell polarity signaling pathway which regulates the septin cytoskeleton in both ciliogenesis and collective cell movements. Functions cell autonomously to regulate wing cell hair polarity and number. The chain is WD repeat-containing and planar cell polarity effector protein fritz (frtz) from Drosophila melanogaster (Fruit fly).